The primary structure comprises 1401 residues: Kinesin-like protein KIF27 (1401 aa).

Residues 5 to 341 (PVKVAVRIRP…LKYANRARNI (337 aa)) form the Kinesin motor domain. 84–91 (GQTGSGKT) serves as a coordination point for ATP. 2 coiled-coil regions span residues 352–413 (ESDR…GYQC) and 489–557 (LAAD…KLNL). S643, S646, S672, S675, and S704 each carry phosphoserine. The segment at 643-662 (SDNSDDEESEGQEKSGTRCR) is disordered. 4 coiled-coil regions span residues 705 to 886 (QELN…IQLK), 916 to 1070 (DHLQ…AAIE), 1118 to 1154 (NKVV…LESA), and 1190 to 1219 (EGIM…TSRD). S999 carries the phosphoserine modification. Residues 1259 to 1280 (EELKWASRPESMKLSGREREMD) show a composition bias toward basic and acidic residues. A disordered region spans residues 1259 to 1332 (EELKWASRPE…TETDDNQFTK (74 aa)). Residues 1281–1292 (SSASSLRTQPNP) show a composition bias toward polar residues. S1367 and S1389 each carry phosphoserine.

This sequence belongs to the TRAFAC class myosin-kinesin ATPase superfamily. Kinesin family. KIF27 subfamily. In terms of assembly, interacts with STK36. Testis, pancreatic islet, germ cell tumors and Jurkat T-cells.

It localises to the cytoplasm. Its subcellular location is the cytoskeleton. The protein resides in the cell projection. It is found in the cilium. In terms of biological role, plays an essential role in motile ciliogenesis. This Homo sapiens (Human) protein is Kinesin-like protein KIF27 (KIF27).